We begin with the raw amino-acid sequence, 395 residues long: Cuticlin-5 (395 aa).

A signal peptide spans 1–18 (MNFILAVFAIILLQAVRG). The Extracellular segment spans residues 19–358 (EIDNAIVGDP…ELCMTAIGTT (340 aa)). The ZP domain maps to 46–291 (SCVGNFIIKV…DYCDVPSCPD (246 aa)). N-linked (GlcNAc...) asparagine glycosylation is found at asparagine 90 and asparagine 307. A helical transmembrane segment spans residues 359–379 (LLVFLNAFLFIISLVSIVHVC). Residues 380-395 (CFRTSPKLEKTKSTML) lie on the Cytoplasmic side of the membrane.

It localises to the cell membrane. In terms of biological role, plays a role in alae formation in L1 and dauer stage larvae. The protein is Cuticlin-5 of Caenorhabditis elegans.